Consider the following 248-residue polypeptide: Thioesterase FSL2 (248 aa).

Active-site charge relay system residues include serine 125, aspartate 195, and histidine 223.

The protein belongs to the LovG family.

It functions in the pathway secondary metabolite biosynthesis. Thioesterase; part of the gene cluster that mediates the biosynthesis of fusarielins F, G and H, decaketide compounds with 5 methylations and a decaline core that act as mycoestrogens as they stimulate growth of MCF-7 breast cancer cells. The initial compound in the pathway is produced by the reducing polyketide synthase FSL1. FSL1 lacks an active enoyl reductase (ER) domain and biosynthesis of fusarielins relies on the trans-acting enoyl reductase FSL5, before it is released through hydrolysis catalyzed by the thioesterase FSL2. Fusarielins F, G, and H have a C11=C12 cis double bond and is fully reduced between C10 and C11 and between C12 and C13. FSL3 can be involved in the formation of the C11=C12 cis double bond by moving a hypothetical C10=C11 or C12=C13 trans double bond to form prefusarielin. Prefusarielin is oxygenated at C15 and C16 by the cytochrome P450 monooxygenase FSL4, resulting in fusarielin F, which subsequently is epoxidized into fusarielin G by the same enzyme. The final step in the pathway is a reduction of the carboxylic acid moiety to yield fusarielin H via a still undetermined mechanism. This is Thioesterase FSL2 from Gibberella zeae (strain ATCC MYA-4620 / CBS 123657 / FGSC 9075 / NRRL 31084 / PH-1) (Wheat head blight fungus).